The chain runs to 535 residues: Ribonuclease Y (535 aa).

The chain crosses the membrane as a helical span at residues 30–50; the sequence is IWALPALVIGLAIGAGIGILI. In terms of domain architecture, KH spans 225 to 285; the sequence is TVSTVALPSE…VRREVARLAL (61 aa). Positions 351 to 444 constitute an HD domain; it reads VLQHSLECAL…VQAVDAISGG (94 aa).

It belongs to the RNase Y family.

Its subcellular location is the cell membrane. Endoribonuclease that initiates mRNA decay. The sequence is that of Ribonuclease Y from Roseiflexus sp. (strain RS-1).